Reading from the N-terminus, the 315-residue chain is Porphobilinogen deaminase (315 aa).

Cysteine 241 carries the post-translational modification S-(dipyrrolylmethanemethyl)cysteine.

Belongs to the HMBS family. In terms of assembly, monomer. Dipyrromethane is required as a cofactor.

The catalysed reaction is 4 porphobilinogen + H2O = hydroxymethylbilane + 4 NH4(+). It functions in the pathway porphyrin-containing compound metabolism; protoporphyrin-IX biosynthesis; coproporphyrinogen-III from 5-aminolevulinate: step 2/4. Functionally, tetrapolymerization of the monopyrrole PBG into the hydroxymethylbilane pre-uroporphyrinogen in several discrete steps. This is Porphobilinogen deaminase from Nitratidesulfovibrio vulgaris (strain ATCC 29579 / DSM 644 / CCUG 34227 / NCIMB 8303 / VKM B-1760 / Hildenborough) (Desulfovibrio vulgaris).